The following is a 225-amino-acid chain: Ribosomal RNA small subunit methyltransferase G (225 aa).

S-adenosyl-L-methionine contacts are provided by residues G71, L76, 121–122 (AE), and R139. The segment at 204–225 (VVEARRATPSNGRGRPGRSSRR) is disordered.

The protein belongs to the methyltransferase superfamily. RNA methyltransferase RsmG family.

Its subcellular location is the cytoplasm. Its function is as follows. Specifically methylates the N7 position of guanine in position 518 of 16S rRNA. In Mycobacterium sp. (strain JLS), this protein is Ribosomal RNA small subunit methyltransferase G.